Here is an 81-residue protein sequence, read N- to C-terminus: Small ribosomal subunit protein bS20 (81 aa).

A compositionally biased stretch (basic residues) spans 1–11 (MPNIKSQKKRV). A disordered region spans residues 1–20 (MPNIKSQKKRVLTNEKSRAS).

This sequence belongs to the bacterial ribosomal protein bS20 family.

Its function is as follows. Binds directly to 16S ribosomal RNA. The sequence is that of Small ribosomal subunit protein bS20 from Mesoplasma florum (strain ATCC 33453 / NBRC 100688 / NCTC 11704 / L1) (Acholeplasma florum).